The primary structure comprises 390 residues: Methylthioribose-1-phosphate isomerase (390 aa).

Substrate is bound by residues 53-55 (RGA), arginine 90, and glutamine 207. The active-site Proton donor is aspartate 248. 258-259 (NK) serves as a coordination point for substrate.

The protein belongs to the EIF-2B alpha/beta/delta subunits family. MtnA subfamily.

The enzyme catalyses 5-(methylsulfanyl)-alpha-D-ribose 1-phosphate = 5-(methylsulfanyl)-D-ribulose 1-phosphate. The catalysed reaction is 5-deoxy-alpha-D-ribose 1-phosphate = 5-deoxy-D-ribulose 1-phosphate. It functions in the pathway amino-acid biosynthesis; L-methionine biosynthesis via salvage pathway; L-methionine from S-methyl-5-thio-alpha-D-ribose 1-phosphate: step 1/6. Catalyzes the interconversion of methylthioribose-1-phosphate (MTR-1-P) into methylthioribulose-1-phosphate (MTRu-1-P). Also catalyzes the interconversion of 5-deoxyribose 1-phosphate and 5-deoxyribulose 1-phosphate. Part of a bifunctional DHAP-shunt salvage pathway for SAM by-products. This is Methylthioribose-1-phosphate isomerase from Rhodospirillum rubrum (strain ATCC 11170 / ATH 1.1.1 / DSM 467 / LMG 4362 / NCIMB 8255 / S1).